A 117-amino-acid chain; its full sequence is Large ribosomal subunit protein eL22 (117 aa).

Phosphoserine occurs at positions 49 and 50.

It belongs to the eukaryotic ribosomal protein eL22 family. As to quaternary structure, component of the large ribosomal subunit (LSU). Mature yeast ribosomes consist of a small (40S) and a large (60S) subunit. The 40S small subunit contains 1 molecule of ribosomal RNA (18S rRNA) and at least 33 different proteins. The large 60S subunit contains 3 rRNA molecules (25S, 5.8S and 5S rRNA) and at least 46 different proteins.

Its subcellular location is the cytoplasm. The protein resides in the nucleus. It localises to the nucleolus. Functionally, component of the ribosome, a large ribonucleoprotein complex responsible for the synthesis of proteins in the cell. The small ribosomal subunit (SSU) binds messenger RNAs (mRNAs) and translates the encoded message by selecting cognate aminoacyl-transfer RNA (tRNA) molecules. The large subunit (LSU) contains the ribosomal catalytic site termed the peptidyl transferase center (PTC), which catalyzes the formation of peptide bonds, thereby polymerizing the amino acids delivered by tRNAs into a polypeptide chain. The nascent polypeptides leave the ribosome through a tunnel in the LSU and interact with protein factors that function in enzymatic processing, targeting, and the membrane insertion of nascent chains at the exit of the ribosomal tunnel. The protein is Large ribosomal subunit protein eL22 (rpl22) of Schizosaccharomyces pombe (strain 972 / ATCC 24843) (Fission yeast).